Reading from the N-terminus, the 931-residue chain is Isoleucine--tRNA ligase (931 aa).

The segment covering 1 to 14 (MDYSKTLNLPQTQF) has biased composition (polar residues). The interval 1–25 (MDYSKTLNLPQTQFPMRGNLPQREP) is disordered. Residues 57 to 67 (PYANGHIHLGH) carry the 'HIGH' region motif. L-isoleucyl-5'-AMP is bound at residue E559. Residues 600–604 (KMSKS) carry the 'KMSKS' region motif. ATP is bound at residue K603. C898, C901, C918, and C921 together coordinate Zn(2+).

Belongs to the class-I aminoacyl-tRNA synthetase family. IleS type 1 subfamily. As to quaternary structure, monomer. Zn(2+) is required as a cofactor.

The protein resides in the cytoplasm. It catalyses the reaction tRNA(Ile) + L-isoleucine + ATP = L-isoleucyl-tRNA(Ile) + AMP + diphosphate. Catalyzes the attachment of isoleucine to tRNA(Ile). As IleRS can inadvertently accommodate and process structurally similar amino acids such as valine, to avoid such errors it has two additional distinct tRNA(Ile)-dependent editing activities. One activity is designated as 'pretransfer' editing and involves the hydrolysis of activated Val-AMP. The other activity is designated 'posttransfer' editing and involves deacylation of mischarged Val-tRNA(Ile). This Desulforamulus reducens (strain ATCC BAA-1160 / DSM 100696 / MI-1) (Desulfotomaculum reducens) protein is Isoleucine--tRNA ligase.